Consider the following 142-residue polypeptide: Hemoglobin subunit alpha-A (142 aa).

The region spanning 2–142 (VLSANDKTNV…VGNVLTAKYR (141 aa)) is the Globin domain. H59 contacts O2. Position 88 (H88) interacts with heme b.

The protein belongs to the globin family. In terms of assembly, heterotetramer of two alpha chains and two beta chains. As to expression, red blood cells.

Functionally, involved in oxygen transport from the lung to the various peripheral tissues. This chain is Hemoglobin subunit alpha-A (HBAA), found in Accipiter gentilis (Northern goshawk).